Here is a 264-residue protein sequence, read N- to C-terminus: Glutamate racemase (264 aa).

Residues 9-10 and 41-42 contribute to the substrate site; these read DS and YG. Residue Cys72 is the Proton donor/acceptor of the active site. 73–74 is a binding site for substrate; that stretch reads NT. The active-site Proton donor/acceptor is the Cys183. Position 184-185 (184-185) interacts with substrate; that stretch reads TH.

It belongs to the aspartate/glutamate racemases family.

It catalyses the reaction L-glutamate = D-glutamate. It functions in the pathway cell wall biogenesis; peptidoglycan biosynthesis. Its function is as follows. Provides the (R)-glutamate required for cell wall biosynthesis. In Geobacillus kaustophilus (strain HTA426), this protein is Glutamate racemase.